The chain runs to 156 residues: Small ribosomal subunit protein uS7 (156 aa).

The protein belongs to the universal ribosomal protein uS7 family. In terms of assembly, part of the 30S ribosomal subunit. Contacts proteins S9 and S11.

Functionally, one of the primary rRNA binding proteins, it binds directly to 16S rRNA where it nucleates assembly of the head domain of the 30S subunit. Is located at the subunit interface close to the decoding center, probably blocks exit of the E-site tRNA. This is Small ribosomal subunit protein uS7 from Micrococcus luteus (strain ATCC 4698 / DSM 20030 / JCM 1464 / CCM 169 / CCUG 5858 / IAM 1056 / NBRC 3333 / NCIMB 9278 / NCTC 2665 / VKM Ac-2230) (Micrococcus lysodeikticus).